The chain runs to 232 residues: Lipoprotein-releasing system ATP-binding protein LolD (232 aa).

Positions 11–231 (VYLHDIRRQY…SLENGHVVEL (221 aa)) constitute an ABC transporter domain. 47–54 (APSGSGKS) serves as a coordination point for ATP.

Belongs to the ABC transporter superfamily. Lipoprotein translocase (TC 3.A.1.125) family. In terms of assembly, the complex is composed of two ATP-binding proteins (LolD) and two transmembrane proteins (LolC and LolE).

The protein resides in the cell inner membrane. In terms of biological role, part of the ABC transporter complex LolCDE involved in the translocation of mature outer membrane-directed lipoproteins, from the inner membrane to the periplasmic chaperone, LolA. Responsible for the formation of the LolA-lipoprotein complex in an ATP-dependent manner. This Nitrobacter hamburgensis (strain DSM 10229 / NCIMB 13809 / X14) protein is Lipoprotein-releasing system ATP-binding protein LolD.